The primary structure comprises 88 residues: FAD assembly factor SdhE (88 aa).

The protein belongs to the SdhE FAD assembly factor family. As to quaternary structure, monomer. Makes weak or transient interactions with SdhA. Interacts with YgfX. Interacts with FrdA.

It localises to the cytoplasm. Its pathway is antibiotic biosynthesis; prodigiosin biosynthesis. In terms of biological role, an FAD assembly protein, which accelerates covalent attachment of the cofactor into other proteins. Plays an essential role in the assembly of succinate dehydrogenase (SDH, respiratory complex II), an enzyme complex that is a component of both the tricarboxylic acid cycle and the electron transport chain, and which couples the oxidation of succinate to fumarate with the reduction of ubiquinone (coenzyme Q) to ubiquinol. Required for flavinylation (covalent attachment of FAD) of the flavoprotein subunit SdhA of SDH. Required for flavinylation of the flavoprotein subunit FrdA of fumarate reductase (FRD). Flavinylation of SDH and FRD occurs in a similar but not identical manner, as site-specific mutations display subtle differences between them. Flavinylates SdhA in vivo in the absence of the other SDH subunits; SdhE mutants that do not flavinylate also interfere with wild-type activity in a possible dominant-negative fashion. Weakly binds to FAD and facilitates its binding to SdhA. Required for production of prodigiosin antibiotic (Pig); overproduction of SdhE in a deletion mutant leads to decreased synthesis of Pig compared to wild-type. Capable of flavinylating A.pasteurianus SdhA when the SDH operon and this gene are expressed in G.oxydans; flavinylation of SdhA is detected only in the presence of sdhE. The protein is FAD assembly factor SdhE of Serratia sp. (strain ATCC 39006) (Prodigiosinella confusarubida).